A 209-amino-acid chain; its full sequence is MANKKRSASSSRWLQEHFSDKYVQQAQKKGLRSRAWFKLDEIQQSDKLFKPGMTVVDLGAAPGGWSQYVVTQIGGSGRIIACDILPMDPIVGVDFLQGDFRDELVLKALLERVGESKVQVVMSDMAPNMSGTPAVDIPRSMYLVELALGMCRDVLAPGGSFLVKVFQGDGFDEYLREIRSLFTKVKIRKPDASRARSREVYIVATGRKL.

S-adenosyl-L-methionine contacts are provided by Gly63, Trp65, Asp83, Asp99, and Asp124. The active-site Proton acceptor is the Lys164.

The protein belongs to the class I-like SAM-binding methyltransferase superfamily. RNA methyltransferase RlmE family.

It is found in the cytoplasm. The catalysed reaction is uridine(2552) in 23S rRNA + S-adenosyl-L-methionine = 2'-O-methyluridine(2552) in 23S rRNA + S-adenosyl-L-homocysteine + H(+). Its function is as follows. Specifically methylates the uridine in position 2552 of 23S rRNA at the 2'-O position of the ribose in the fully assembled 50S ribosomal subunit. This is Ribosomal RNA large subunit methyltransferase E from Serratia proteamaculans (strain 568).